The following is a 134-amino-acid chain: B3 domain-containing protein At1g16640 (134 aa).

The segment at residues 7–100 (VQFMKPFISE…TFYVIIYGHN (94 aa)) is a DNA-binding region (TF-B3).

It is found in the nucleus. The protein is B3 domain-containing protein At1g16640 of Arabidopsis thaliana (Mouse-ear cress).